Here is a 217-residue protein sequence, read N- to C-terminus: Protein-L-isoaspartate O-methyltransferase (217 aa).

The active site involves Ser-61.

Belongs to the methyltransferase superfamily. L-isoaspartyl/D-aspartyl protein methyltransferase family.

Its subcellular location is the cytoplasm. The enzyme catalyses [protein]-L-isoaspartate + S-adenosyl-L-methionine = [protein]-L-isoaspartate alpha-methyl ester + S-adenosyl-L-homocysteine. In terms of biological role, catalyzes the methyl esterification of L-isoaspartyl residues in peptides and proteins that result from spontaneous decomposition of normal L-aspartyl and L-asparaginyl residues. It plays a role in the repair and/or degradation of damaged proteins. In Brucella anthropi (strain ATCC 49188 / DSM 6882 / CCUG 24695 / JCM 21032 / LMG 3331 / NBRC 15819 / NCTC 12168 / Alc 37) (Ochrobactrum anthropi), this protein is Protein-L-isoaspartate O-methyltransferase.